A 359-amino-acid chain; its full sequence is GTPase Obg (359 aa).

Residues 1–159 form the Obg domain; it reads MQFIDQAEIQ…RSLRLELKLL (159 aa). The 169-residue stretch at 160–328 folds into the OBG-type G domain; sequence AEVGIIGLPN…LLHQIWQELE (169 aa). GTP is bound by residues 166 to 173, 191 to 195, 213 to 216, 280 to 283, and 309 to 311; these read GLPNAGKS, FTTLV, DIPG, NKID, and SAI. 2 residues coordinate Mg(2+): Ser173 and Thr193.

The protein belongs to the TRAFAC class OBG-HflX-like GTPase superfamily. OBG GTPase family. As to quaternary structure, monomer. It depends on Mg(2+) as a cofactor.

The protein resides in the cytoplasm. An essential GTPase which binds GTP, GDP and possibly (p)ppGpp with moderate affinity, with high nucleotide exchange rates and a fairly low GTP hydrolysis rate. Plays a role in control of the cell cycle, stress response, ribosome biogenesis and in those bacteria that undergo differentiation, in morphogenesis control. This Cyanothece sp. (strain PCC 7425 / ATCC 29141) protein is GTPase Obg.